A 539-amino-acid polypeptide reads, in one-letter code: Oviduct-specific glycoprotein (539 aa).

The signal sequence occupies residues 1–21; that stretch reads MGKLLLWVGLLLMLKHHDGAA. The GH18 domain occupies 22–385; sequence HKLVCYFTNW…HTLNNLLVND (364 aa). Cys-26 and Cys-51 are disulfide-bonded. Residues 71-72, 98-101, Tyr-142, 211-214, and Trp-355 each bind chitin; these read PL, GGWN, and LSYD. An N-linked (GlcNAc...) asparagine glycan is attached at Asn-402. Disordered regions lie at residues 433-480 and 503-539; these read TETH…KPLT and QKVT…LERL. Residues 440 to 457 are compositionally biased toward low complexity; it reads ATMTTTPRGETATPTRTP.

The protein belongs to the glycosyl hydrolase 18 family. Oviduct.

Its subcellular location is the cytoplasmic vesicle. The protein localises to the secretory vesicle. Functionally, binds to oocyte zona pellucida in vivo. May play a role in the fertilization process and/or early embryonic development. In Ovis aries (Sheep), this protein is Oviduct-specific glycoprotein (OVGP1).